Reading from the N-terminus, the 445-residue chain is D-serine dehydratase (445 aa).

Residue Lys-118 is modified to N6-(pyridoxal phosphate)lysine.

Belongs to the serine/threonine dehydratase family. DsdA subfamily. Monomer. Pyridoxal 5'-phosphate serves as cofactor.

The enzyme catalyses D-serine = pyruvate + NH4(+). This Serratia proteamaculans (strain 568) protein is D-serine dehydratase.